The primary structure comprises 334 residues: MAPEISVNPMYLSEKAHQAPPRRAYVTFLAGNGDYVKGVVGLAKGLRKVKSAYPLVVAMLPDVPEEHREILRSQGCVVREIEPVYPPDNQVEFAMAYYVLNYSKLRIWNFEEYSKMIYLDADIQVFDNIDHLFDLSDAYFYAVMDCFCEKTWSHSLQYSIGYCQQCPEKVTWPEDMESPPPPLYFNAGMFVFEPSPLTYESLLQTLEITPPSPFAEQDFLNMFFEKVYKPIPLVYNLVLAMLWRHPENVELEKVKVVHYCAAGSKPWRYTGEEANMDREDIKMLVDKWWDVYNDESLDFKSKIPADAEETVTKSSILASVLEPEMTYFPAPSAA.

Lys-104 is an active-site residue. Mn(2+) is bound by residues Asp-120, Asp-122, and His-258.

Belongs to the glycosyltransferase 8 family. Galactosyltransferase subfamily. A divalent metal cation serves as cofactor.

It localises to the cytoplasm. The enzyme catalyses myo-inositol + UDP-alpha-D-galactose = alpha-D-galactosyl-(1-&gt;3)-1D-myo-inositol + UDP + H(+). Its function is as follows. Galactinol synthase involved in the biosynthesis of raffinose family oligosaccharides (RFOs) that function as osmoprotectants. May promote plant stress tolerance. The polypeptide is Galactinol synthase 4 (GOLS4) (Arabidopsis thaliana (Mouse-ear cress)).